The chain runs to 839 residues: Protein translocase subunit SecA (839 aa).

ATP contacts are provided by residues Gln-86, 104 to 108 (GEGKT), and Asp-493. The tract at residues 794-839 (GIDMDNLQTSGPSDRPDPETSGDADPKNRAQRRAQEQERKRQNKKQ) is disordered. The span at 807–833 (DRPDPETSGDADPKNRAQRRAQEQERK) shows a compositional bias: basic and acidic residues.

It belongs to the SecA family. As to quaternary structure, monomer and homodimer. Part of the essential Sec protein translocation apparatus which comprises SecA, SecYEG and auxiliary proteins SecDF. Other proteins may also be involved.

It is found in the cell membrane. It localises to the cytoplasm. The enzyme catalyses ATP + H2O + cellular proteinSide 1 = ADP + phosphate + cellular proteinSide 2.. Functionally, part of the Sec protein translocase complex. Interacts with the SecYEG preprotein conducting channel. Has a central role in coupling the hydrolysis of ATP to the transfer of proteins into and across the cell membrane, serving as an ATP-driven molecular motor driving the stepwise translocation of polypeptide chains across the membrane. This Brevibacillus brevis (strain 47 / JCM 6285 / NBRC 100599) protein is Protein translocase subunit SecA.